Reading from the N-terminus, the 29-residue chain is 28 kDa protein (29 aa).

The polypeptide is 28 kDa protein (Tritrichomonas foetus (Trichomonas foetus)).